Here is a 160-residue protein sequence, read N- to C-terminus: Serine-protein kinase RsbW (160 aa).

This sequence belongs to the anti-sigma-factor family.

It catalyses the reaction L-seryl-[protein] + ATP = O-phospho-L-seryl-[protein] + ADP + H(+). It carries out the reaction L-threonyl-[protein] + ATP = O-phospho-L-threonyl-[protein] + ADP + H(+). Its function is as follows. Negative regulator of sigma-B activity. Phosphorylates and inactivates its specific antagonist protein, RsbV. Upon phosphorylation of RsbV, RsbW is released and binds to sigma-B, thereby blocking its ability to form an RNA polymerase holoenzyme (E-sigma-B). The sequence is that of Serine-protein kinase RsbW from Bacillus velezensis (strain DSM 23117 / BGSC 10A6 / LMG 26770 / FZB42) (Bacillus amyloliquefaciens subsp. plantarum).